The chain runs to 355 residues: Phenylalanine--tRNA ligase alpha subunit (355 aa).

Glu273 is a binding site for Mg(2+).

Belongs to the class-II aminoacyl-tRNA synthetase family. Phe-tRNA synthetase alpha subunit type 1 subfamily. In terms of assembly, tetramer of two alpha and two beta subunits. Mg(2+) serves as cofactor.

The protein resides in the cytoplasm. It catalyses the reaction tRNA(Phe) + L-phenylalanine + ATP = L-phenylalanyl-tRNA(Phe) + AMP + diphosphate + H(+). This Bifidobacterium animalis subsp. lactis (strain AD011) protein is Phenylalanine--tRNA ligase alpha subunit.